A 557-amino-acid chain; its full sequence is Nucleolin 1 (557 aa).

3 disordered regions span residues 1–297, 376–398, and 474–557; these read MGKS…GGSK, GERG…GDGG, and LVVD…FGDE. The segment covering 49-63 has biased composition (basic and acidic residues); the sequence is QKEKAVKKVPKKVES. Acidic residues-rich tracts occupy residues 64 to 74, 91 to 101, and 124 to 135; these read SDDSDSESEEE, ESSDDSSSDDE, and SSSDDDSSDEEV. Positions 174-184 are enriched in low complexity; that stretch reads AKIAKPAAKDS. A compositionally biased stretch (acidic residues) spans 186–197; the sequence is SSDDDSDEDSED. The span at 203–217 shows a compositional bias: low complexity; sequence KKAAPAAAKAASSSD. Residues 218–229 show a composition bias toward acidic residues; the sequence is SSDEDSDEESED. Residues 230-247 show a composition bias toward basic and acidic residues; that stretch reads EKPAQKKADTKASKKSSS. Over residues 249 to 263 the composition is skewed to acidic residues; the sequence is ESSESEEDESEDEEE. Basic and acidic residues predominate over residues 264–281; the sequence is TPKKKSSDVEMVDAEKSS. The RRM 1 domain maps to 297-374; the sequence is KTLFAANLSF…REIRLDIAQE (78 aa). The region spanning 401–481 is the RRM 2 domain; it reads KKIFVKGFDA…FYLVVDEPRP (81 aa). Gly residues predominate over residues 485-503; the sequence is SSGGGGFGRGNGRFGSGGG.

As to quaternary structure, interacts with THAL in the nucleus. In terms of tissue distribution, expressed in roots, leaves, shoots and flowers.

The protein localises to the nucleus. It localises to the nucleolus. In terms of biological role, involved in pre-rRNA processing and ribosome assembly. Is associated with intranucleolar chromatin and pre-ribosomal particles and plays a role in controlling activation and repression of a specific subset of rRNA genes located in distinctive nucleolar organizer regions. Binds specifically rDNA chromatin and may be required to maintain rDNA chromatin structure, but is probably not required for the overall histone methylation status of 45S rRNA genes. Involved in leaf polarity establishment by functioning cooperatively with AS1 to repress abaxial genes ARF3, ARF4, KAN1, KAN2, YAB1 and YAB5, and the knox homeobox genes KNAT1, KNAT2, KNAT6, and STM to promote adaxial development in leaf primordia at shoot apical meristems at high temperatures. The polypeptide is Nucleolin 1 (Arabidopsis thaliana (Mouse-ear cress)).